Reading from the N-terminus, the 501-residue chain is 2,3-bisphosphoglycerate-independent phosphoglycerate mutase (501 aa).

Mn(2+) is bound by residues Asp-12 and Ser-62. Ser-62 (phosphoserine intermediate) is an active-site residue. Residues His-121, 150–151, Arg-182, Arg-188, 253–256, and Lys-322 each bind substrate; these read RD and RSDR. The Mn(2+) site is built by Asp-389, His-393, Asp-430, His-431, and His-449.

Belongs to the BPG-independent phosphoglycerate mutase family. In terms of assembly, monomer. It depends on Mn(2+) as a cofactor.

It catalyses the reaction (2R)-2-phosphoglycerate = (2R)-3-phosphoglycerate. It participates in carbohydrate degradation; glycolysis; pyruvate from D-glyceraldehyde 3-phosphate: step 3/5. Its function is as follows. Catalyzes the interconversion of 2-phosphoglycerate and 3-phosphoglycerate. This is 2,3-bisphosphoglycerate-independent phosphoglycerate mutase from Ehrlichia ruminantium (strain Welgevonden).